A 356-amino-acid polypeptide reads, in one-letter code: Dihydroorotate dehydrogenase (quinone) (356 aa).

Residues 60–64 (AGFDK) and Ser84 contribute to the FMN site. Residue Lys64 participates in substrate binding. 109 to 113 (NRFGF) contributes to the substrate binding site. Asn140 and Asn171 together coordinate FMN. Asn171 contacts substrate. Ser174 acts as the Nucleophile in catalysis. Asn176 is a binding site for substrate. Residues Lys216 and Gly244 each coordinate FMN. Position 245–246 (245–246 (NT)) interacts with substrate. Residues Gly267, Gly296, and 317 to 318 (YS) each bind FMN.

This sequence belongs to the dihydroorotate dehydrogenase family. Type 2 subfamily. Monomer. FMN is required as a cofactor.

Its subcellular location is the cell membrane. The enzyme catalyses (S)-dihydroorotate + a quinone = orotate + a quinol. It participates in pyrimidine metabolism; UMP biosynthesis via de novo pathway; orotate from (S)-dihydroorotate (quinone route): step 1/1. Functionally, catalyzes the conversion of dihydroorotate to orotate with quinone as electron acceptor. This chain is Dihydroorotate dehydrogenase (quinone), found in Azorhizobium caulinodans (strain ATCC 43989 / DSM 5975 / JCM 20966 / LMG 6465 / NBRC 14845 / NCIMB 13405 / ORS 571).